The sequence spans 311 residues: ATP synthase gamma chain (311 aa).

It belongs to the ATPase gamma chain family. As to quaternary structure, F-type ATPases have 2 components, CF(1) - the catalytic core - and CF(0) - the membrane proton channel. CF(1) has five subunits: alpha(3), beta(3), gamma(1), delta(1), epsilon(1). CF(0) has three main subunits: a, b and c.

It localises to the cell membrane. Its function is as follows. Produces ATP from ADP in the presence of a proton gradient across the membrane. The gamma chain is believed to be important in regulating ATPase activity and the flow of protons through the CF(0) complex. This is ATP synthase gamma chain from Limosilactobacillus fermentum (strain NBRC 3956 / LMG 18251) (Lactobacillus fermentum).